The sequence spans 110 residues: Small ubiquitin-related modifier 3 (110 aa).

Residues Lys5 and Lys7 each participate in a glycyl lysine isopeptide (Lys-Gly) (interchain with G-Cter in SUMO2) cross-link. Lys11 is covalently cross-linked (Glycyl lysine isopeptide (Lys-Gly) (interchain with G-Cter in SUMO); alternate). Residue Lys11 forms a Glycyl lysine isopeptide (Lys-Gly) (interchain with G-Cter in SUMO2); alternate linkage. A Ubiquitin-like domain is found at 15–92; sequence DHINLKVAGQ…IDVFQQQTGG (78 aa). Residues 89–101 are compositionally biased toward polar residues; that stretch reads QTGGTASRASVPT. Residues 89–110 are disordered; that stretch reads QTGGTASRASVPTPSHFPDICY. Residue Gly92 forms a Glycyl lysine isopeptide (Gly-Lys) (interchain with K-? in acceptor proteins) linkage. A propeptide spanning residues 93 to 110 is cleaved from the precursor; it reads TASRASVPTPSHFPDICY.

It belongs to the ubiquitin family. SUMO subfamily. As to quaternary structure, interacts with SAE2 and UBE2I. Covalently attached to a number of proteins. Interacts with USP25 (via ts SIM domain); the interaction sumoylates USP25 and inhibits its ubiquitin hydrolyzing activity. Interacts with BMAL1. In terms of processing, polymeric chains can be formed through Lys-11 cross-linking. Cleavage of precursor form by SENP1, SENP2 or SENP5 is necessary for function.

The protein localises to the cytoplasm. It localises to the nucleus. Its subcellular location is the PML body. In terms of biological role, ubiquitin-like protein which can be covalently attached to target lysines either as a monomer or as a lysine-linked polymer. Does not seem to be involved in protein degradation and may function as an antagonist of ubiquitin in the degradation process. Plays a role in a number of cellular processes such as nuclear transport, DNA replication and repair, mitosis and signal transduction. Covalent attachment to its substrates requires prior activation by the E1 complex SAE1-SAE2 and linkage to the E2 enzyme UBE2I, and can be promoted by an E3 ligase such as PIAS1-4, RANBP2 or CBX4. Plays a role in the regulation of sumoylation status of SETX. This Rattus norvegicus (Rat) protein is Small ubiquitin-related modifier 3 (Sumo3).